We begin with the raw amino-acid sequence, 396 residues long: Gap junction gamma-1 protein (396 aa).

The Cytoplasmic portion of the chain corresponds to 1–18; it reads MSWSFLTRLLEEIHNHST. Residues 19-39 traverse the membrane as a helical segment; it reads FVGKIWLTVLIVFRIVLTAVG. The Extracellular segment spans residues 40–75; the sequence is GESIYYDEQSKFVCNTEQPGCENVCYDAFAPLSHVR. Residues 76–96 traverse the membrane as a helical segment; sequence FWVFQIILVATPSVMYLGYAI. Residues 97 to 175 are Cytoplasmic-facing; it reads HKIAKMEHGE…RRIREDGLMK (79 aa). Residues 145–165 form a disordered region; the sequence is ELESEKENKEQSQPKPKHDGR. Residues 147-156 are compositionally biased toward basic and acidic residues; that stretch reads ESEKENKEQS. The chain crosses the membrane as a helical span at residues 176 to 198; sequence IYVLQLLARTVFEVGFLIGQYFL. Topologically, residues 199-229 are extracellular; that stretch reads YGFQVHPFYVCSRLPCPHKIDCFISRPTEKT. Residues 230-250 traverse the membrane as a helical segment; it reads IFLLIMYGVTGLCLLLNIWEM. At 251 to 396 the chain is on the cytoplasmic side; the sequence is LHLGFGTIRD…SGDGKTSVWI (146 aa). Positions 303–358 form a coiled coil; it reads ELSNAKIAYKQNKANIAQEQQYGSHEEHLPADLETLQREIRMAQERLDLAIQAYHH. The disordered stretch occupies residues 357–396; the sequence is HHQNNPHGPREKKAKVGSKSGSNKSSISSKSGDGKTSVWI. The span at 373-396 shows a compositional bias: low complexity; sequence GSKSGSNKSSISSKSGDGKTSVWI.

Belongs to the connexin family. Gamma-type subfamily. A connexon is composed of a hexamer of connexins. Interacts with CNST.

The protein resides in the cell membrane. The protein localises to the cell junction. It is found in the gap junction. Its function is as follows. One gap junction consists of a cluster of closely packed pairs of transmembrane channels, the connexons, through which materials of low MW diffuse from one cell to a neighboring cell. The chain is Gap junction gamma-1 protein (GJC1) from Cricetulus griseus (Chinese hamster).